A 101-amino-acid polypeptide reads, in one-letter code: Small ribosomal subunit protein bS6 (101 aa).

This sequence belongs to the bacterial ribosomal protein bS6 family.

Functionally, binds together with bS18 to 16S ribosomal RNA. The protein is Small ribosomal subunit protein bS6 of Nitratidesulfovibrio vulgaris (strain DSM 19637 / Miyazaki F) (Desulfovibrio vulgaris).